Reading from the N-terminus, the 122-residue chain is Large ribosomal subunit protein uL14 (122 aa).

It belongs to the universal ribosomal protein uL14 family. Part of the 50S ribosomal subunit. Forms a cluster with proteins L3 and L19. In the 70S ribosome, L14 and L19 interact and together make contacts with the 16S rRNA in bridges B5 and B8.

In terms of biological role, binds to 23S rRNA. Forms part of two intersubunit bridges in the 70S ribosome. In Corynebacterium glutamicum (strain R), this protein is Large ribosomal subunit protein uL14.